A 587-amino-acid polypeptide reads, in one-letter code: Proline-rich protein 14 (587 aa).

An N-acetylmethionine modification is found at M1. A compositionally biased stretch (polar residues) spans 1 to 11 (MDLPGDSSTPG). Disordered regions lie at residues 1–48 (MDLP…EKAS), 65–152 (VPLE…HQPT), and 181–241 (ARRA…RPRL). Residues 1-135 (MDLPGDSSTP…TPRRQSRTTP (135 aa)) form a sufficient for heterochromatin association in interphase and chromatin association in anaphase region. A required for the interaction with GRB2 and sufficient to promote the phosphorylation of AKT and cell proliferation region spans residues 85 to 378 (SVRSQPPASP…MAKAPPPPRP (294 aa)). The segment at 136–365 (GPDEGPSQKV…RPRPRRHTVG (230 aa)) is required for nuclear lamina association. Residues 200–214 (LPAPSRPSALSANPL) show a composition bias toward low complexity. Over residues 215–234 (ASPPPAPDPVLEPPSTPPPS) the composition is skewed to pro residues. The residue at position 277 (S277) is a Phosphoserine. 2 disordered regions span residues 290–444 (EAGQ…IGKV) and 524–587 (FRDS…PHRT). Polar residues predominate over residues 314-325 (AQDQNPSATLTK). Residues 337–356 (LGPPGPDPCSWPPVPAPSSR) are compositionally biased toward pro residues. A compositionally biased stretch (low complexity) spans 398–410 (TSCSSTASTSSFS). Residues 519–536 (RRTVEFRDSSLPRSRRPS) are required for nuclear localization. Residues 538 to 548 (GARATAGRTLP) are compositionally biased toward low complexity. Over residues 572 to 581 (LLEEEEEGDQ) the composition is skewed to acidic residues.

Interacts (via proline-rich region) with GRB2 (via SH3 domain 2). Interacts (via N-terminus) with CBX5.

It is found in the chromosome. The protein resides in the nucleus. Its subcellular location is the nucleus lamina. It localises to the nucleoplasm. Functionally, functions in tethering peripheral heterochromatin to the nuclear lamina during interphase, possibly through the interaction with heterochromatin protein CBX5/HP1 alpha. Might play a role in reattaching heterochromatin to the nuclear lamina at mitotic exit. Promotes myoblast differentiation during skeletal myogenesis, possibly by stimulating transcription factor MyoD activity via binding to CBX5/HP1 alpha. Involved in the positive regulation of the PI3K-Akt-mTOR signaling pathway and in promoting cell proliferation, possibly via binding to GRB2. The chain is Proline-rich protein 14 (PRR14) from Bos taurus (Bovine).